The primary structure comprises 208 residues: MTQNPGKFIVIEGLEGAGKSSAITLVHDFIEKHTGMAPVCTREPGGTPLAEKIRDLVKNAEPGDPLCDEAECLLFYAARAQLVANVIKPSLASGRWVLGDRHNLSSIAYQGGGRGLMSLVKTISDATLGGFKPDLTLYLDIDPLLGLERAARRGALDRIEQQEIDFFHRARATFLAQARDDSSIVVIDASKPLNEVHKDILACLSTAL.

Residue 13–20 (GLEGAGKS) coordinates ATP.

The protein belongs to the thymidylate kinase family.

The catalysed reaction is dTMP + ATP = dTDP + ADP. Its function is as follows. Phosphorylation of dTMP to form dTDP in both de novo and salvage pathways of dTTP synthesis. This chain is Thymidylate kinase, found in Shewanella amazonensis (strain ATCC BAA-1098 / SB2B).